The following is a 314-amino-acid chain: PDCD10 and GCKIII kinases-associated protein 1 (314 aa).

Residue serine 30 is modified to Phosphoserine. The interval 36 to 142 is disordered; it reads DDTDKLKGKW…TQPFLEGGGT (107 aa). At threonine 106 the chain carries Phosphothreonine. Polar residues predominate over residues 107 to 116; sequence PQPTGNSSPT. Residues serine 238 and serine 241 each carry the phosphoserine modification. Residues 267-291 form a disordered region; sequence VDSGNRQEDTHGSDGDGDGEIVDED. Positions 271 to 280 are enriched in basic and acidic residues; the sequence is NRQEDTHGSD. Residues 281–291 are compositionally biased toward acidic residues; the sequence is GDGDGEIVDED.

In terms of assembly, interacts with KEAP1; this interaction prevents the ubiquitination of KEAP1 by TRIM25, thus protecting KEAP1 from degradation. Found in association with PDCD10 and members of the STE20 kinases, such as STK24, STK25 and STK26.

The protein resides in the cell membrane. In terms of biological role, acts as a tumor suppressor. Acts as a tumor suppressor for colorectal cancer cell proliferation by targeting KEAP1/USP17/ELK1/CDK6 axis. This Homo sapiens (Human) protein is PDCD10 and GCKIII kinases-associated protein 1.